The chain runs to 85 residues: Large ribosomal subunit protein bL27 (85 aa).

Polar residues predominate over residues 1–13 (MAKTKSGGSTSNG). A disordered region spans residues 1–26 (MAKTKSGGSTSNGRDSKGRRLGQKLG).

This sequence belongs to the bacterial ribosomal protein bL27 family.

This Mycoplasma mobile (strain ATCC 43663 / 163K / NCTC 11711) (Mesomycoplasma mobile) protein is Large ribosomal subunit protein bL27.